The following is a 214-amino-acid chain: Adenylate kinase (214 aa).

10–15 (GAGKGT) is a binding site for ATP. Positions 30–59 (STGDMLRAAVKAGSELGLKAKEIMDAGKLV) are NMP. AMP is bound by residues threonine 31, arginine 36, 57–59 (KLV), 85–88 (GFPR), and glutamine 92. The LID stretch occupies residues 122–159 (GRRVHAASGRVYHVKFNPPKVEDKDDVTGEDLTIRKDD). ATP contacts are provided by residues arginine 123 and 132–133 (VY). AMP is bound by residues arginine 156 and arginine 167. Arginine 200 provides a ligand contact to ATP.

Belongs to the adenylate kinase family. Monomer.

It is found in the cytoplasm. The catalysed reaction is AMP + ATP = 2 ADP. It functions in the pathway purine metabolism; AMP biosynthesis via salvage pathway; AMP from ADP: step 1/1. In terms of biological role, catalyzes the reversible transfer of the terminal phosphate group between ATP and AMP. Plays an important role in cellular energy homeostasis and in adenine nucleotide metabolism. The sequence is that of Adenylate kinase from Yersinia enterocolitica serotype O:8 / biotype 1B (strain NCTC 13174 / 8081).